The sequence spans 479 residues: Ribosomal RNA small subunit methyltransferase F (479 aa).

S-adenosyl-L-methionine contacts are provided by residues Ala-125–Lys-131, Glu-149, Asp-176, and Asp-194. Cys-247 (nucleophile) is an active-site residue.

This sequence belongs to the class I-like SAM-binding methyltransferase superfamily. RsmB/NOP family.

It is found in the cytoplasm. The catalysed reaction is cytidine(1407) in 16S rRNA + S-adenosyl-L-methionine = 5-methylcytidine(1407) in 16S rRNA + S-adenosyl-L-homocysteine + H(+). In terms of biological role, specifically methylates the cytosine at position 1407 (m5C1407) of 16S rRNA. This Salmonella newport (strain SL254) protein is Ribosomal RNA small subunit methyltransferase F.